The sequence spans 468 residues: Alpha-2A adrenergic receptor (468 aa).

The Extracellular portion of the chain corresponds to 1 to 48; that stretch reads MFRQEQPLAEGSFAPMGSLQPDAGNASWNGTEAPGGGARATPYSLQVT. Residues Asn-25 and Asn-29 are each glycosylated (N-linked (GlcNAc...) asparagine). A helical transmembrane segment spans residues 49–74; sequence LTLVCLAGLLMLFTVFGNVLVIIAVF. Residues 75-85 are Cytoplasmic-facing; it reads TSRALKAPQNL. The chain crosses the membrane as a helical span at residues 86–111; sequence FLVSLASADILVATLVIPFSLANEVM. Topologically, residues 112–121 are extracellular; it reads GYWYFGKAWC. The cysteines at positions 121 and 203 are disulfide-linked. The helical transmembrane segment at 122 to 144 threads the bilayer; sequence EIYLALDVLFCTSSIVHLCAISL. Topologically, residues 145-164 are cytoplasmic; that stretch reads DRYWSITQAIEYNLKRTPRR. Residues 165–188 form a helical membrane-spanning segment; it reads IKAIIVTVWVISAVISFPPLISFE. Over 189–207 the chain is Extracellular; that stretch reads KKRGRSGQPSAEPRCEIND. Residues 208-232 traverse the membrane as a helical segment; the sequence is QKWYVISSSIGSFFAPCLIMILVYV. Residues 233 to 392 lie on the Cytoplasmic side of the membrane; that stretch reads RIYQIAKRRT…RQNREKRFTF (160 aa). Disordered regions lie at residues 242–279 and 291–381; these read TRVPPSRRGPDATAAELPGSAERRPNGLGPERGGVGPV and NGAP…SRWR. Residues 315–332 show a composition bias toward basic and acidic residues; it reads SSEHAERPPGSRRSERGP. The residue at position 348 (Ser-348) is a Phosphoserine. The segment covering 351-366 has biased composition (low complexity); sequence RRGPGATGLGAPTAGP. Arg-370 carries the omega-N-methylarginine modification. A helical membrane pass occupies residues 393–417; the sequence is VLAVVIGVFVVCWFPFFFTYTLTAI. At 418 to 427 the chain is on the extracellular side; sequence GCPVPPTLFK. The helical transmembrane segment at 428–448 threads the bilayer; that stretch reads FFFWFGYCNSSLNPVIYTIFN. Residues 449–468 lie on the Cytoplasmic side of the membrane; it reads HDFRRAFKKILCRGDRKRIV. The S-palmitoyl cysteine moiety is linked to residue Cys-460.

This sequence belongs to the G-protein coupled receptor 1 family. Adrenergic receptor subfamily. ADRA2A sub-subfamily. As to quaternary structure, component of the ADA2A-containing complex (ATAC), composed of KAT14, KAT2A, TADA2L, TADA3L, ZZ3, MBIP, WDR5, YEATS2, CCDC101 and DR1. In terms of tissue distribution, retina, brain and olfactory lobe.

It localises to the cell membrane. Its function is as follows. Alpha-2 adrenergic receptors mediate the catecholamine-induced inhibition of adenylate cyclase through the action of G proteins. Component of the ATAC complex, a complex with histone acetyltransferase activity on histones H3 and H4. This is Alpha-2A adrenergic receptor from Bos taurus (Bovine).